A 1273-amino-acid chain; its full sequence is DNA gyrase subunit A (1273 aa).

The Topo IIA-type catalytic domain occupies 42–931 (LPEVRDGLKP…VDGDVNDEDL (890 aa)). The O-(5'-phospho-DNA)-tyrosine intermediate role is filled by Tyr130. The 141-residue stretch at 256 to 396 (LFGAFISGGF…VQQMLLEFGV (141 aa)) folds into the DOD-type homing endonuclease domain. The short motif at 958-964 (QKRGGKG) is the GyrA-box element.

The protein belongs to the type II topoisomerase GyrA/ParC subunit family. Heterotetramer, composed of two GyrA and two GyrB chains. In the heterotetramer, GyrA contains the active site tyrosine that forms a transient covalent intermediate with the DNA, while GyrB binds cofactors catalyzes ATP hydrolysis. In terms of processing, this protein undergoes a protein self splicing that involves a post-translational excision of the intervening region (intein) followed by peptide ligation.

The protein resides in the cytoplasm. The catalysed reaction is ATP-dependent breakage, passage and rejoining of double-stranded DNA.. DNA supercoiling is inhibited by fluoroquinolones; IC(50) 1 ug/ml for sitafloxacin. Its function is as follows. A type II topoisomerase that negatively supercoils closed circular double-stranded (ds) DNA in an ATP-dependent manner to modulate DNA topology and maintain chromosomes in an underwound state. Negative supercoiling favors strand separation, and DNA replication, transcription, recombination and repair, all of which involve strand separation. Also able to catalyze the interconversion of other topological isomers of dsDNA rings, including catenanes and knotted rings. Type II topoisomerases break and join 2 DNA strands simultaneously in an ATP-dependent manner. The polypeptide is DNA gyrase subunit A (Mycobacterium leprae (strain TN)).